The sequence spans 464 residues: NADH-quinone oxidoreductase subunit N 2 (464 aa).

14 consecutive transmembrane segments (helical) span residues valine 12–phenylalanine 32, leucine 33–tyrosine 53, isoleucine 62–phenylalanine 82, threonine 93–serine 113, leucine 117–methionine 137, leucine 152–alanine 172, phenylalanine 189–phenylalanine 209, phenylalanine 227–isoleucine 247, phenylalanine 254–tyrosine 274, methionine 282–leucine 304, isoleucine 310–leucine 330, proline 351–alanine 371, isoleucine 400–threonine 420, and isoleucine 434–phenylalanine 454.

It belongs to the complex I subunit 2 family. In terms of assembly, NDH-1 is composed of 14 different subunits. Subunits NuoA, H, J, K, L, M, N constitute the membrane sector of the complex.

It localises to the cell inner membrane. It catalyses the reaction a quinone + NADH + 5 H(+)(in) = a quinol + NAD(+) + 4 H(+)(out). NDH-1 shuttles electrons from NADH, via FMN and iron-sulfur (Fe-S) centers, to quinones in the respiratory chain. The immediate electron acceptor for the enzyme in this species is believed to be ubiquinone. Couples the redox reaction to proton translocation (for every two electrons transferred, four hydrogen ions are translocated across the cytoplasmic membrane), and thus conserves the redox energy in a proton gradient. The polypeptide is NADH-quinone oxidoreductase subunit N 2 (Hydrogenobaculum sp. (strain Y04AAS1)).